Consider the following 312-residue polypeptide: Taste receptor type 2 member 62 (312 aa).

Residues 1–4 lie on the Extracellular side of the membrane; sequence MPSL. The chain crosses the membrane as a helical span at residues 5 to 27; it reads PTLIFIAIFCLESLAAMLQNGFL. Over 28–39 the chain is Cytoplasmic; the sequence is VTMLGREWVRCR. A helical transmembrane segment spans residues 40–62; the sequence is MLSTSDMIVACLAASRFCLHGVA. Residues 63–81 lie on the Extracellular side of the membrane; sequence MANNLLASLDFSRAVPYMN. A helical membrane pass occupies residues 82-104; it reads IFWDLFNALTLWFTALLAAFYCV. The Cytoplasmic segment spans residues 105-127; the sequence is KISSFSHPTFAWLKWRISRLVPK. A helical transmembrane segment spans residues 128-150; sequence LIKGSLIICGLEVISSATGNILF. Residues 151–182 lie on the Extracellular side of the membrane; the sequence is GQRKVSLSSYRNETLVYRVQASFQLYFFLYDG. Asn162 carries an N-linked (GlcNAc...) asparagine glycan. Residues 183 to 205 traverse the membrane as a helical segment; it reads FVWSIPFLLFLVSTVLLIVSLCW. Topologically, residues 206 to 231 are cytoplasmic; it reads QLGQMRDLRPGPCDPSTQAYTMALKS. Residues 232–254 traverse the membrane as a helical segment; that stretch reads LTFSLIFCTLYFLSLFASALKII. The Extracellular segment spans residues 255–258; the sequence is NFQN. Residues 259–281 form a helical membrane-spanning segment; it reads HWHWAWEVLIYANICLHSTVLVL. At 282–312 the chain is on the cytoplasmic side; it reads RSPKLKKGLKTWPQLQCPCDAGSQGFGRCWP.

This sequence belongs to the G-protein coupled receptor T2R family.

The protein localises to the membrane. Receptor that may play a role in the perception of bitterness and is gustducin-linked. May play a role in sensing the chemical composition of the gastrointestinal content. The activity of this receptor may stimulate alpha gustducin, mediate PLC-beta-2 activation and lead to the gating of TRPM5. The sequence is that of Taste receptor type 2 member 62 (TAS2R62) from Pan paniscus (Pygmy chimpanzee).